Consider the following 428-residue polypeptide: UPF0597 protein BF3772 (428 aa).

Belongs to the UPF0597 family.

This is UPF0597 protein BF3772 from Bacteroides fragilis (strain YCH46).